Consider the following 323-residue polypeptide: MESNQEYQVLLYYQYVTIDDPEAFAEEHLRYCKEIGLKGRILVANEGINGTVSGTIEQTTAYMDHMHNDERFHDMTFKIDPHEGHTFKKMHVRPRPELVTLRLEDDVNPLETTGEYLEPKDFYQALQDENTVVLDARNDYEYDLGHFRGAIRPDIKTFRDLPDWVQENKDMLEGKKVVTYCTGGIRCEKFSGWLVKEGFEDVAQLHGGIVTYGQDPEVQGDLWDGQLYVFDERISVPVNRKEHVIVGKDYFDGEPCERYVNCANPECNKQILASEENEHKYLRGCTHECRVTPRNLYVKEHELTGTQVEERLLAIGESLTQEV.

The 95-residue stretch at 127–221 (QDENTVVLDA…YGQDPEVQGD (95 aa)) folds into the Rhodanese domain. The Cysteine persulfide intermediate role is filled by cysteine 181.

Belongs to the TrhO family.

It catalyses the reaction uridine(34) in tRNA + AH2 + O2 = 5-hydroxyuridine(34) in tRNA + A + H2O. Functionally, catalyzes oxygen-dependent 5-hydroxyuridine (ho5U) modification at position 34 in tRNAs. The sequence is that of tRNA uridine(34) hydroxylase from Oceanobacillus iheyensis (strain DSM 14371 / CIP 107618 / JCM 11309 / KCTC 3954 / HTE831).